The primary structure comprises 807 residues: MQFFGRLVNTLSSVTNLFSNPFRVKEVSLTDYVSSERVREEGQLILLQNVSNRTWDCVLVSPRNPQSGFRLFQLESEADALVNFQQFSSQLPPFYESSVQVLHVEVLQHLTDLIRNHPSWTVTHLAVELGIRECFHHSRIISCANSTENEEGCTPLHLACRKGDSEILVELVQYCHAQMDVTDNKGETAFHYAVQGDNPQVLQLLGKNASAGLNQVNNQGLTPLHLACKMGKQEMVRVLLLCNARCNIMGPGGFPIHTAMKFSQKGCAEMIISMDSNQIHSKDPRYGASPLHWAKNAEMARMLLKRGCDVDSTSSSGNTALHVAVMRNRFDCVMVLLTYGANAGARGEHGNTPLHLAMSKDNMEMVKALIVFGAEVDTPNDFGETPALIASKISKLITRKALLTLLKTVGADHHFPIIQGVSTEQGSAAATHPLFSLDRTQPPAISLNNLELQDLMPISRARKPAFILSSMRDEKRSHDHLLCLDGGGVKGLVIIQLLIAIEKASGVATKDLFDWVAGTSTGGILALAILHSKSMAYMRGVYFRMKDEVFRGSRPYESGPLEEFLKREFGEHTKMTDVKKPKVMLTGTLSDRQPAELHLFRNYDAPEAVREPRCNQNINLKPPTQPADQLVWRAARSSGAAPTYFRPNGRFLDGGLLANNPTLDAMTEIHEYNQDMIRKGQGNKVKKLSIVVSLGTGKSPQVPVTCVDVFRPSNPWELAKTVFGAKELGKMVVDCCTDPDGRAVDRARAWCEMVGIQYFRLNPQLGSDIMLDEVSDAVLVNALWETEVYIYEHREEFQKLVQLLLSP.

Phosphoserine is present on serine 13. 9 ANK repeats span residues 120–147, 151–181, 185–215, 219–248, 251–281, 286–312, 316–345, 349–378, and 382–403; these read WTVT…ANST, EGCT…QMDV, KGET…GLNQ, QGLT…RCNI, PGGF…QIHS, YGAS…DVDS, SGNT…NAGA, HGNT…EVDT, and FGET…KALL. Transmembrane regions (helical) follow at residues 481 to 501 and 512 to 532; these read LLCL…LIAI and LFDW…ILHS. A PNPLA domain is found at 482–666; the sequence is LCLDGGGVKG…LANNPTLDAM (185 aa). The GXGXXG signature appears at 486–491; that stretch reads GGGVKG. Residues 518–522 carry the GXSXG motif; the sequence is GTSTG. Serine 520 functions as the Nucleophile in the catalytic mechanism. The active-site Proton acceptor is the aspartate 653. Residues 653-655 carry the DGA/G motif; that stretch reads DGG. Residues 678–687 are calmodulin-binding (1-9-14 motif); that stretch reads RKGQGNKVKK. Residues 749–760 are calmodulin-binding (IQ motif); it reads AWCEMVGIQYFR.

Homodimer formed by catalytic domains tightly interacting through a large hydrophobic interface. The contact area involves 3 alpha helices, several loops and a part of the beta sheet from each monomer. Both active sites of the dimer are in close proximity adopting an open conformation that provide sufficient space for phospholipid access and favoring cooperativity in deacylation-reacylation reactions. Each monomer has 9 ankyrin repeats stacked side-by-side in an elongated structure oriented outwards from the catalytic core. Expressed in neurons of central and peripheral nervous system. Highly expressed in Purkinje cells in cerebellum and dorsal and ventral horn neurons in the spinal cord. Expressed in testis (at protein level). Expressed in skeletal muscle (at protein level).

It localises to the cytoplasm. Its subcellular location is the cell membrane. It is found in the mitochondrion. The protein resides in the cell projection. The protein localises to the pseudopodium. The catalysed reaction is a 1,2-diacyl-sn-glycero-3-phosphocholine + H2O = a 1-acyl-sn-glycero-3-phosphocholine + a fatty acid + H(+). The enzyme catalyses a 1-O-alkyl-2-acyl-sn-glycero-3-phosphocholine + H2O = a 1-O-alkyl-sn-glycero-3-phosphocholine + a fatty acid + H(+). It catalyses the reaction 1,2-dihexadecanoyl-sn-glycero-3-phosphocholine + H2O = 1-hexadecanoyl-sn-glycero-3-phosphocholine + hexadecanoate + H(+). It carries out the reaction 1-hexadecanoyl-2-(9Z-octadecenoyl)-sn-glycero-3-phosphocholine + H2O = 1-hexadecanoyl-sn-glycero-3-phosphocholine + (9Z)-octadecenoate + H(+). The catalysed reaction is 1-hexadecanoyl-2-(9Z,12Z-octadecadienoyl)-sn-glycero-3-phosphocholine + H2O = (9Z,12Z)-octadecadienoate + 1-hexadecanoyl-sn-glycero-3-phosphocholine + H(+). The enzyme catalyses 1-hexadecanoyl-2-(5Z,8Z,11Z,14Z-eicosatetraenoyl)-sn-glycero-3-phosphocholine + H2O = 1-hexadecanoyl-sn-glycero-3-phosphocholine + (5Z,8Z,11Z,14Z)-eicosatetraenoate + H(+). It catalyses the reaction 1-octadecanoyl-2-(5Z,8Z,11Z,14Z-eicosatetraenoyl)-sn-glycero-3-phosphocholine + H2O = 1-octadecanoyl-sn-glycero-3-phosphocholine + (5Z,8Z,11Z,14Z)-eicosatetraenoate + H(+). It carries out the reaction 1-hexadecanoyl-2-(5Z,8Z,11Z,14Z-eicosatetraenoyl)-sn-glycero-3-phosphoethanolamine + H2O = 1-hexadecanoyl-sn-glycero-3-phosphoethanolamine + (5Z,8Z,11Z,14Z)-eicosatetraenoate + H(+). The catalysed reaction is 1,2-dihexadecanoyl-sn-glycero-3-phosphate + H2O = 1-hexadecanoyl-sn-glycero-3-phosphate + hexadecanoate + H(+). The enzyme catalyses a 1-acyl-sn-glycero-3-phosphocholine + H2O = sn-glycerol 3-phosphocholine + a fatty acid + H(+). It catalyses the reaction 1-hexadecanoyl-sn-glycero-3-phosphocholine + H2O = sn-glycerol 3-phosphocholine + hexadecanoate + H(+). It carries out the reaction 1-(5Z,8Z,11Z,14Z-eicosatetraenoyl)-sn-glycero-3-phosphocholine + H2O = sn-glycerol 3-phosphocholine + (5Z,8Z,11Z,14Z)-eicosatetraenoate + H(+). The catalysed reaction is 2-(5Z,8Z,11Z,14Z)-eicosatetraenoyl-sn-glycero-3-phosphocholine + H2O = sn-glycerol 3-phosphocholine + (5Z,8Z,11Z,14Z)-eicosatetraenoate + H(+). The enzyme catalyses 1-O-hexadecyl-2-(5Z,8Z,11Z,14Z)-eicosatetraenoyl-sn-glycero-3-phosphocholine + H2O = 1-O-hexadecyl-sn-glycero-3-phosphocholine + (5Z,8Z,11Z,14Z)-eicosatetraenoate + H(+). It catalyses the reaction 1-O-hexadecyl-2-acetyl-sn-glycero-3-phosphocholine + H2O = 1-O-hexadecyl-sn-glycero-3-phosphocholine + acetate + H(+). It carries out the reaction hexadecanoyl-CoA + H2O = hexadecanoate + CoA + H(+). The catalysed reaction is 1',3'-bis[1,2-di-(9Z-octadecenoyl)-sn-glycero-3-phospho]-glycerol + H2O = 1'-[1,2-di-(9Z-octadecenoyl)-sn-glycero-3-phospho]-3'-[1-(9Z-octadecenoyl)-sn-glycero-3-phospho]-glycerol + (9Z)-octadecenoate + H(+). The enzyme catalyses 1'-[1,2-di-(9Z-octadecenoyl)-sn-glycero-3-phospho]-3'-[1-(9Z-octadecenoyl)-sn-glycero-3-phospho]-glycerol + H2O = 1',3'-bis-[1-(9Z-octadecenoyl)-sn-glycero-3-phospho]-glycerol + (9Z)-octadecenoate + H(+). It catalyses the reaction 1',3'-bis-[1,2-di-(9Z,12Z-octadecadienoyl)-sn-glycero-3-phospho]-glycerol + H2O = 1'-[1,2-di-(9Z,12Z-octadecadienoyl)-sn-glycero-3-phospho]-3'-[1-(9Z,12Z-octadecadienoyl)-sn-glycero-3-phospho]-glycerol + (9Z,12Z)-octadecadienoate + H(+). It carries out the reaction 1-octadecanoyl-2-(15-hydroxy-(5Z,8Z,11Z,13E)-eicosatetraenoyl)-sn-glycero-3-phosphoethanolamine + H2O = 1-octadecanoyl-sn-glycero-3-phosphoethanolamine + 15-hydroxy-(5Z,8Z,11Z,13E)-eicosatetraenoate + H(+). Inhibited by calcium-activated calmodulin. Activated by ATP. Inhibited by bromoenol lactone (BEL). Calcium-independent phospholipase involved in phospholipid remodeling with implications in cellular membrane homeostasis, mitochondrial integrity and signal transduction. Hydrolyzes the ester bond of the fatty acyl group attached at sn-1 or sn-2 position of phospholipids (phospholipase A1 and A2 activity respectively), producing lysophospholipids that are used in deacylation-reacylation cycles. Hydrolyzes both saturated and unsaturated long fatty acyl chains in various glycerophospholipid classes such as phosphatidylcholines, phosphatidylethanolamines and phosphatidates, with a preference for hydrolysis at sn-2 position. Can further hydrolyze lysophospholipids carrying saturated fatty acyl chains (lysophospholipase activity). Upon oxidative stress, contributes to remodeling of mitochondrial phospholipids in pancreatic beta cells, in a repair mechanism to reduce oxidized lipid content. Preferentially hydrolyzes oxidized polyunsaturated fatty acyl chains from cardiolipins, yielding monolysocardiolipins that can be reacylated with unoxidized fatty acyls to regenerate native cardiolipin species. Hydrolyzes oxidized glycerophosphoethanolamines present in pancreatic islets, releasing oxidized polyunsaturated fatty acids such as hydroxyeicosatetraenoates (HETEs). Has thioesterase activity toward fatty-acyl CoA releasing CoA-SH known to facilitate fatty acid transport and beta-oxidation in mitochondria particularly in skeletal muscle. Plays a role in regulation of membrane dynamics and homeostasis. Selectively hydrolyzes sn-2 arachidonoyl group in plasmalogen phospholipids, structural components of lipid rafts and myelin. Regulates F-actin polymerization at the pseudopods, which is required for both speed and directionality of MCP1/CCL2-induced monocyte chemotaxis. Targets membrane phospholipids to produce potent lipid signaling messengers. Generates lysophosphatidate (LPA, 1-acyl-glycerol-3-phosphate), which acts via G-protein receptors in various cell types. Has phospholipase A2 activity toward platelet-activating factor (PAF, 1-O-alkyl-2-acetyl-sn-glycero-3-phosphocholine), likely playing a role in inactivation of this potent pro-inflammatory signaling lipid. In response to glucose, amplifies calcium influx in pancreatic beta cells to promote INS secretion. This chain is 85/88 kDa calcium-independent phospholipase A2 (Pla2g6), found in Mus musculus (Mouse).